The following is a 317-amino-acid chain: D-alanine--D-alanine ligase (317 aa).

An ATP-grasp domain is found at 103 to 299 (KHIFHSLNID…FNELVKIIVE (197 aa)). 130-183 (KVDYPYVLKPINEGSSIGVHMIFSHEDYLELKNNSSTIMEKMIIEEYIPGIELH) lines the ATP pocket. Aspartate 251, glutamate 265, and asparagine 267 together coordinate Mg(2+).

Belongs to the D-alanine--D-alanine ligase family. Mg(2+) is required as a cofactor. It depends on Mn(2+) as a cofactor.

It is found in the cytoplasm. The catalysed reaction is 2 D-alanine + ATP = D-alanyl-D-alanine + ADP + phosphate + H(+). It functions in the pathway cell wall biogenesis; peptidoglycan biosynthesis. Cell wall formation. The protein is D-alanine--D-alanine ligase of Wolbachia pipientis subsp. Culex pipiens (strain wPip).